Consider the following 227-residue polypeptide: Superoxide dismutase [Cu-Zn] (227 aa).

The signal sequence occupies residues 1-19 (MPKLLPPVVLAGCVVALGA). Residue Cys20 is the site of N-palmitoyl cysteine attachment. The S-diacylglycerol cysteine moiety is linked to residue Cys20. Residues 23–55 (PQHASSLPGTTPAVWTGSPSPSGAGAAEAAPAA) are disordered. Residues 39 to 55 (GSPSPSGAGAAEAAPAA) are compositionally biased toward low complexity. His103 and His105 together coordinate Cu cation. Residues Cys110 and Cys221 are joined by a disulfide bond. Asp145 contributes to the Zn(2+) binding site. Cu cation is bound at residue His182.

The protein belongs to the Cu-Zn superoxide dismutase family. Requires Cu cation as cofactor. The cofactor is Zn(2+).

The protein localises to the cell membrane. The enzyme catalyses 2 superoxide + 2 H(+) = H2O2 + O2. Functionally, destroys radicals which are normally produced within the cells and which are toxic to biological systems. May play a role in favoring mycobacterial survival in phagocytes. This Mycolicibacterium paratuberculosis (strain ATCC BAA-968 / K-10) (Mycobacterium paratuberculosis) protein is Superoxide dismutase [Cu-Zn] (sodC).